We begin with the raw amino-acid sequence, 205 residues long: Outer-membrane lipoprotein LolB (205 aa).

Residues 1 to 17 (MFLRHVIVFSLIALLTG) form the signal peptide. Cysteine 18 is lipidated: N-palmitoyl cysteine. Residue cysteine 18 is the site of S-diacylglycerol cysteine attachment.

It belongs to the LolB family. Monomer.

It is found in the cell outer membrane. Functionally, plays a critical role in the incorporation of lipoproteins in the outer membrane after they are released by the LolA protein. The sequence is that of Outer-membrane lipoprotein LolB from Pseudomonas syringae pv. syringae (strain B728a).